Consider the following 671-residue polypeptide: ATP-dependent zinc metalloprotease FtsH (671 aa).

At 1 to 22 (MANPNNNNDNKQNNNNNFFNDN) the chain is on the cytoplasmic side. Residues 23–43 (PLLAFAIFSIVIILIFKSFVG) form a helical membrane-spanning segment. Topologically, residues 44-130 (EGESLGTMMN…ISYEGVVGNG (87 aa)) are periplasmic. Residues 131–151 (FFSELISMMLPILIFFAIWIF) traverse the membrane as a helical segment. Over 152 to 671 (LAKKMSKGMG…SEESDNNKEA (520 aa)) the chain is Cytoplasmic. 224–231 (GPPGTGKT) provides a ligand contact to ATP. His447 serves as a coordination point for Zn(2+). Residue Glu448 is part of the active site. Residues His451 and Asp525 each coordinate Zn(2+). The interval 630 to 671 (EKGMPSRLAHKDKVAKNKAEADKKEEALKKEISEESDNNKEA) is disordered.

The protein in the central section; belongs to the AAA ATPase family. It in the C-terminal section; belongs to the peptidase M41 family. As to quaternary structure, homohexamer. Zn(2+) serves as cofactor.

Its subcellular location is the cell inner membrane. Its function is as follows. Acts as a processive, ATP-dependent zinc metallopeptidase for both cytoplasmic and membrane proteins. Plays a role in the quality control of integral membrane proteins. The protein is ATP-dependent zinc metalloprotease FtsH of Sulfurovum sp. (strain NBC37-1).